The sequence spans 414 residues: Gamma-glutamyl phosphate reductase (414 aa).

It belongs to the gamma-glutamyl phosphate reductase family.

It localises to the cytoplasm. The enzyme catalyses L-glutamate 5-semialdehyde + phosphate + NADP(+) = L-glutamyl 5-phosphate + NADPH + H(+). It participates in amino-acid biosynthesis; L-proline biosynthesis; L-glutamate 5-semialdehyde from L-glutamate: step 2/2. Its function is as follows. Catalyzes the NADPH-dependent reduction of L-glutamate 5-phosphate into L-glutamate 5-semialdehyde and phosphate. The product spontaneously undergoes cyclization to form 1-pyrroline-5-carboxylate. The polypeptide is Gamma-glutamyl phosphate reductase (Thermoanaerobacter pseudethanolicus (strain ATCC 33223 / 39E) (Clostridium thermohydrosulfuricum)).